A 239-amino-acid polypeptide reads, in one-letter code: Purine nucleoside phosphorylase DeoD-type (239 aa).

H5 serves as a coordination point for a purine D-ribonucleoside. Phosphate is bound by residues G21, R25, R44, and 88 to 91; that span reads RIGS. A purine D-ribonucleoside-binding positions include 180–182 and 204–205; these read EME and TD. D205 serves as the catalytic Proton donor.

This sequence belongs to the PNP/UDP phosphorylase family. Homohexamer; trimer of homodimers.

The catalysed reaction is a purine D-ribonucleoside + phosphate = a purine nucleobase + alpha-D-ribose 1-phosphate. It catalyses the reaction a purine 2'-deoxy-D-ribonucleoside + phosphate = a purine nucleobase + 2-deoxy-alpha-D-ribose 1-phosphate. Catalyzes the reversible phosphorolytic breakdown of the N-glycosidic bond in the beta-(deoxy)ribonucleoside molecules, with the formation of the corresponding free purine bases and pentose-1-phosphate. This is Purine nucleoside phosphorylase DeoD-type from Aliivibrio fischeri (strain ATCC 700601 / ES114) (Vibrio fischeri).